Reading from the N-terminus, the 218-residue chain is Leucine-rich repeat protein 1 (218 aa).

Residues 1–27 (MASRNYRWELFAASLTLTLALIHLVEA) form the signal peptide. LRR repeat units follow at residues 94–117 (EHLQ…LGNL), 119–140 (NLIS…SLGK), 141–165 (LKSL…LTAI), and 167–190 (SLKV…PFAH).

In terms of assembly, interacts with HIR1.

Involved in plant defense response. This is Leucine-rich repeat protein 1 from Arabidopsis thaliana (Mouse-ear cress).